The primary structure comprises 588 residues: Aspartate--tRNA ligase (588 aa).

E177 is an L-aspartate binding site. Residues 201 to 204 (QIFK) are aspartate. R223 lines the L-aspartate pocket. Residues 223 to 225 (RDE) and Q232 each bind ATP. L-aspartate is bound at residue H451. E485 serves as a coordination point for ATP. Residue R492 participates in L-aspartate binding. 537–540 (GLDR) provides a ligand contact to ATP.

Belongs to the class-II aminoacyl-tRNA synthetase family. Type 1 subfamily. As to quaternary structure, homodimer.

It localises to the cytoplasm. It catalyses the reaction tRNA(Asp) + L-aspartate + ATP = L-aspartyl-tRNA(Asp) + AMP + diphosphate. Functionally, catalyzes the attachment of L-aspartate to tRNA(Asp) in a two-step reaction: L-aspartate is first activated by ATP to form Asp-AMP and then transferred to the acceptor end of tRNA(Asp). In Staphylococcus saprophyticus subsp. saprophyticus (strain ATCC 15305 / DSM 20229 / NCIMB 8711 / NCTC 7292 / S-41), this protein is Aspartate--tRNA ligase.